Reading from the N-terminus, the 245-residue chain is Small ribosomal subunit protein uS2 (245 aa).

The protein belongs to the universal ribosomal protein uS2 family.

This is Small ribosomal subunit protein uS2 from Pseudomonas entomophila (strain L48).